Consider the following 149-residue polypeptide: Transcriptional repressor NrdR (149 aa).

A zinc finger spans residues Cys3 to Cys34. Positions Pro49–Glu139 constitute an ATP-cone domain.

It belongs to the NrdR family. Zn(2+) is required as a cofactor.

In terms of biological role, negatively regulates transcription of bacterial ribonucleotide reductase nrd genes and operons by binding to NrdR-boxes. The protein is Transcriptional repressor NrdR of Aliivibrio salmonicida (strain LFI1238) (Vibrio salmonicida (strain LFI1238)).